We begin with the raw amino-acid sequence, 342 residues long: Phosphate acyltransferase (342 aa).

Belongs to the PlsX family. Homodimer. Probably interacts with PlsY.

It is found in the cytoplasm. The enzyme catalyses a fatty acyl-[ACP] + phosphate = an acyl phosphate + holo-[ACP]. It functions in the pathway lipid metabolism; phospholipid metabolism. Its function is as follows. Catalyzes the reversible formation of acyl-phosphate (acyl-PO(4)) from acyl-[acyl-carrier-protein] (acyl-ACP). This enzyme utilizes acyl-ACP as fatty acyl donor, but not acyl-CoA. This chain is Phosphate acyltransferase, found in Actinobacillus succinogenes (strain ATCC 55618 / DSM 22257 / CCUG 43843 / 130Z).